The primary structure comprises 933 residues: Collagen alpha-2(I) chain (933 aa).

A compositionally biased stretch (gly residues) spans 1-16 (SGGFDFGVGLGPGPMG). Disordered stretches follow at residues 1–191 (SGGF…LTGA) and 206–933 (LPGP…AGVR). The segment covering 17–53 (LMGPRGPPGASGAPGPQGFQGPAGEPGEPGQTGPAGA) has biased composition (low complexity). Residues Pro-24 and Pro-30 each carry the 4-hydroxyproline modification. Residues 57 to 72 (KAGEDGHPGKPGRPGE) are compositionally biased toward basic and acidic residues. The residue at position 94 (Lys-94) is a 5-hydroxylysine; alternate. The O-linked (Gal...) hydroxylysine; alternate glycan is linked to Lys-94. Low complexity-rich tracts occupy residues 108–137 (VGAP…SAGP), 162–176 (AGPR…VSGP), and 213–228 (PGPV…RGLV). Residues 280-289 (GLRGGPGSRG) are compositionally biased toward gly residues. 2 positions are modified to 4-hydroxyproline: Pro-317 and Pro-320. Positions 413–422 (GVQGGKGEQG) are enriched in gly residues. 2 stretches are compositionally biased toward low complexity: residues 468–485 (PGES…SRGP) and 497–507 (EPGVVGAPGTA). Gly residues predominate over residues 508–517 (GPAGSGGLPG). Composition is skewed to low complexity over residues 540–584 (VGTT…PRGS), 591–611 (VGPA…QPGA), and 627–640 (PTGP…SGPN). The span at 644-656 (GPAGGRGDGGPPG) shows a compositional bias: gly residues. The span at 657-667 (LTGFPGAAGRT) shows a compositional bias: low complexity. A compositionally biased stretch (gly residues) spans 704–713 (GETGAGGPPG). 2 stretches are compositionally biased toward low complexity: residues 721–748 (SGEP…LGLP) and 756–781 (LPGV…RGPS). Residues 795-807 (AGRDGLPGHKGER) are compositionally biased toward basic and acidic residues. Composition is skewed to low complexity over residues 809–831 (YAGN…VGPA) and 840–860 (PGPA…PSGP). The span at 864-874 (RGDKGEGDKGP) shows a compositional bias: basic and acidic residues.

It belongs to the fibrillar collagen family. As to quaternary structure, trimers of one alpha 2(I) and two alpha 1(I) chains. Interacts (via C-terminus) with TMEM131 (via PapD-L domain); the interaction is direct and is involved in assembly and TRAPPIII ER-to-Golgi transport complex-dependent secretion of collagen. Prolines at the third position of the tripeptide repeating unit (G-X-Y) are hydroxylated in some or all of the chains. In terms of tissue distribution, expressed in bones.

The protein resides in the secreted. Its subcellular location is the extracellular space. The protein localises to the extracellular matrix. Its function is as follows. Type I collagen is a member of group I collagen (fibrillar forming collagen). The sequence is that of Collagen alpha-2(I) chain from Glyptodon sp. (strain SLP-2019) (Giant armadillo).